Reading from the N-terminus, the 215-residue chain is Extracellular small neutral protease (215 aa).

An N-terminal signal peptide occupies residues 1 to 30 (MRMTRAASALAGLGLAVAAALGSVAPASAA). Ca(2+) is bound at residue Thr-152. A Zn(2+)-binding site is contributed by His-157. The active site involves Glu-158. Zn(2+) contacts are provided by His-161 and Asp-167. Cys-173 and Cys-186 are joined by a disulfide.

This sequence belongs to the peptidase M7 family. The cofactor is Zn(2+).

It is found in the secreted. The catalysed reaction is Hydrolyzes proteins with a preference for Tyr or Phe in the P1' position. Has no action on amino-acid p-nitroanilides.. The sequence is that of Extracellular small neutral protease (snpA) from Streptomyces coelicolor.